Consider the following 1192-residue polypeptide: Protein argonaute 13 (1192 aa).

Residues 183–296 (TVIQFVEEFL…LPMEVCKIVE (114 aa)) enclose the PAZ domain. Residues 472–770 (LLIVILLEVS…AASHAHCCIK (299 aa)) form the Piwi domain.

Belongs to the argonaute family. Ago subfamily.

In terms of biological role, probably involved in the RNA silencing pathway. May bind to short RNAs such as microRNAs (miRNAs) or short interfering RNAs (siRNAs), and represses the translation of mRNAs which are complementary to them. The protein is Protein argonaute 13 (AGO13) of Oryza sativa subsp. japonica (Rice).